Here is a 72-residue protein sequence, read N- to C-terminus: Translation initiation factor IF-1 (72 aa).

An S1-like domain is found at 1–72 (MSKEEAIEVE…SRGRITYRAK (72 aa)).

The protein belongs to the IF-1 family. In terms of assembly, component of the 30S ribosomal translation pre-initiation complex which assembles on the 30S ribosome in the order IF-2 and IF-3, IF-1 and N-formylmethionyl-tRNA(fMet); mRNA recruitment can occur at any time during PIC assembly.

It localises to the cytoplasm. In terms of biological role, one of the essential components for the initiation of protein synthesis. Stabilizes the binding of IF-2 and IF-3 on the 30S subunit to which N-formylmethionyl-tRNA(fMet) subsequently binds. Helps modulate mRNA selection, yielding the 30S pre-initiation complex (PIC). Upon addition of the 50S ribosomal subunit IF-1, IF-2 and IF-3 are released leaving the mature 70S translation initiation complex. This is Translation initiation factor IF-1 from Geobacter metallireducens (strain ATCC 53774 / DSM 7210 / GS-15).